Consider the following 332-residue polypeptide: Nucleotide-binding protein RC1_2868 (332 aa).

The tract at residues methionine 1–glycine 27 is disordered. Over residues threonine 10–threonine 22 the composition is skewed to low complexity. Glycine 36 to serine 43 contacts ATP. Residue aspartate 82–threonine 85 coordinates GTP. Basic and acidic residues-rich tracts occupy residues glycine 302 to alanine 312 and valine 322 to arginine 332. Positions glycine 302–arginine 332 are disordered.

This sequence belongs to the RapZ-like family.

Its function is as follows. Displays ATPase and GTPase activities. The sequence is that of Nucleotide-binding protein RC1_2868 from Rhodospirillum centenum (strain ATCC 51521 / SW).